The following is a 1531-amino-acid chain: Slit homolog 1 protein (1531 aa).

The signal sequence occupies residues 1–33 (MALTPQRGSSSGLSRPELWLLLWAAAWRLGATA). The 28-residue stretch at 34 to 61 (CPALCTCTGTTVDCHGTGLQAIPKNIPR) folds into the LRRNT domain. LRR repeat units lie at residues 62 to 83 (NTER…DFAG), 86 to 107 (QLRV…AFDD), 110 to 131 (ELER…LFQN), 134 to 155 (ALSR…AFRG), 158 to 179 (DLKN…AFRA), and 182 to 203 (GLEV…SFNH). N72 carries N-linked (GlcNAc...) asparagine glycosylation. N192 carries N-linked (GlcNAc...) asparagine glycosylation. The 51-residue stretch at 215–265 (NHLFCDCHLAWLSQWLRQRPTIGLFTQCSGPASLRGLNVAEVQKSEFSCSG) folds into the LRRCT 1 domain. One can recognise an LRRNT 2 domain in the interval 273–309 (PACTLSSGSCPAMCSCSNGIVDCRGKGLTAIPANLPE). A disulfide bridge links C286 with C295. LRR repeat units lie at residues 310 to 331 (TMTE…AFSP), 334 to 355 (KLRR…AFQG), 358 to 379 (SLNS…VFGG), 382 to 403 (TLQL…AFQD), and 406 to 427 (NLSL…TFTS). N-linked (GlcNAc...) asparagine glycosylation occurs at N406. The LRRCT 2 domain occupies 439-489 (NPFICDCNLKWLADFLRTNPIETTGARCASPRRLANKRIGQIKSKKFRCSA). 4 disulfides stabilise this stretch: C443–C466, C445–C487, C513–C519, and C517–C526. An LRRNT 3 domain is found at 504–540 (NSECTSDVACPHKCRCEASVVECSGLKLSKIPERIPQ). LRR repeat units lie at residues 541-562 (STTE…GLFK), 566-587 (HLKK…TFEG), 590-611 (SVSE…MFRG), 614-635 (GLRT…SFTG), and 638-659 (NVRL…AFDT). N571 is a glycosylation site (N-linked (GlcNAc...) asparagine). N630 carries an N-linked (GlcNAc...) asparagine glycan. The 51-residue stretch at 671–721 (NPFNCNCQLAWLGDWLRKRKIVTGNPRCQNPDFLRQIPLQDVAFPDFRCEE) folds into the LRRCT 3 domain. 2 cysteine pairs are disulfide-bonded: C675-C698 and C677-C719. The LRRNT 4 domain maps to 725–761 (EVGCLPRPQCPQECACLDTVVRCSNKHLQALPKGIPK). N762, N801, and N806 each carry an N-linked (GlcNAc...) asparagine glycan. LRR repeat units lie at residues 762 to 783 (NVTE…LSTF), 785 to 806 (YLQL…SFTN), 809 to 830 (QLTT…AFQG), and 833 to 854 (SLRL…IFAD). The LRRCT 4 domain maps to 866-916 (NPLYCDCHLRWLSSWVKTGYKEPGIARCAGPPEMEGKLLLTTPAKKFECQG). EGF-like domains follow at residues 927 to 962 (DPCL…RNCE), 964 to 1003 (SLDS…LTCG), 1005 to 1041 (NTDD…RACE), 1043 to 1081 (LVDF…DNCS), 1083 to 1119 (NQDD…QLCE), and 1124 to 1160 (PRNS…PECE). 18 cysteine pairs are disulfide-bonded: C929–C940, C934–C950, C952–C961, C968–C979, C973–C991, C993–C1002, C1009–C1020, C1014–C1029, C1031–C1040, C1047–C1060, C1054–C1069, C1071–C1080, C1087–C1098, C1092–C1107, C1109–C1118, C1128–C1139, C1133–C1148, and C1150–C1159. N1026 carries an N-linked (GlcNAc...) asparagine glycan. N1079 carries an N-linked (GlcNAc...) asparagine glycan. The 174-residue stretch at 1163 to 1336 (LSVNFVDRDT…QMKPGVVPGC (174 aa)) folds into the Laminin G-like domain. N-linked (GlcNAc...) asparagine glycosylation is found at N1186, N1256, and N1303. Intrachain disulfides connect C1310-C1336, C1339-C1349, C1344-C1359, C1361-C1370, C1378-C1388, C1383-C1398, C1400-C1409, C1419-C1429, C1424-C1439, C1441-C1450, C1456-C1495, C1474-C1509, C1485-C1525, and C1489-C1527. 3 EGF-like domains span residues 1337–1371 (EPCR…LHCD), 1374–1410 (VDGP…ALCN), and 1415–1451 (VAEP…ELCE). Residues 1456–1531 (CRGDPVRDFH…PTKCGCAPCA (76 aa)) enclose the CTCK domain.

In terms of assembly, interacts with ROBO1 and GREM1. In adult brains expressed in the hippocampus, cerebral cortex, and olfactory bulb but not in the cerebellum. In embryo expressed in cerebral cortex.

It localises to the secreted. Thought to act as molecular guidance cue in cellular migration, and function appears to be mediated by interaction with roundabout homolog receptors. During neural development involved in axonal navigation at the ventral midline of the neural tube and projection of axons to different regions. SLIT1 and SLIT2 together seem to be essential for midline guidance in the forebrain by acting as repulsive signal preventing inappropriate midline crossing by axons projecting from the olfactory bulb. The protein is Slit homolog 1 protein (Slit1) of Rattus norvegicus (Rat).